The chain runs to 122 residues: Large ribosomal subunit protein bL12 (122 aa).

It belongs to the bacterial ribosomal protein bL12 family. In terms of assembly, homodimer. Part of the ribosomal stalk of the 50S ribosomal subunit. Forms a multimeric L10(L12)X complex, where L10 forms an elongated spine to which 2 to 4 L12 dimers bind in a sequential fashion. Binds GTP-bound translation factors.

In terms of biological role, forms part of the ribosomal stalk which helps the ribosome interact with GTP-bound translation factors. Is thus essential for accurate translation. The polypeptide is Large ribosomal subunit protein bL12 (Buchnera aphidicola subsp. Acyrthosiphon pisum (strain Tuc7)).